The chain runs to 122 residues: Large ribosomal subunit protein uL18 (122 aa).

The span at 1-21 (MSKLSRKQQTQKRHRRLRRHL) shows a compositional bias: basic residues. Positions 1 to 26 (MSKLSRKQQTQKRHRRLRRHLTGTSD) are disordered.

Belongs to the universal ribosomal protein uL18 family. In terms of assembly, part of the 50S ribosomal subunit; part of the 5S rRNA/L5/L18/L25 subcomplex. Contacts the 5S and 23S rRNAs.

Functionally, this is one of the proteins that bind and probably mediate the attachment of the 5S RNA into the large ribosomal subunit, where it forms part of the central protuberance. The chain is Large ribosomal subunit protein uL18 from Parasynechococcus marenigrum (strain WH8102).